A 326-amino-acid chain; its full sequence is 4-hydroxythreonine-4-phosphate dehydrogenase (326 aa).

Residues histidine 130 and threonine 131 each coordinate substrate. Residues histidine 160, histidine 205, and histidine 260 each contribute to the a divalent metal cation site. Lysine 268, asparagine 277, and arginine 286 together coordinate substrate.

This sequence belongs to the PdxA family. In terms of assembly, homodimer. It depends on Zn(2+) as a cofactor. Mg(2+) is required as a cofactor. Requires Co(2+) as cofactor.

Its subcellular location is the cytoplasm. It catalyses the reaction 4-(phosphooxy)-L-threonine + NAD(+) = 3-amino-2-oxopropyl phosphate + CO2 + NADH. It functions in the pathway cofactor biosynthesis; pyridoxine 5'-phosphate biosynthesis; pyridoxine 5'-phosphate from D-erythrose 4-phosphate: step 4/5. In terms of biological role, catalyzes the NAD(P)-dependent oxidation of 4-(phosphooxy)-L-threonine (HTP) into 2-amino-3-oxo-4-(phosphooxy)butyric acid which spontaneously decarboxylates to form 3-amino-2-oxopropyl phosphate (AHAP). The polypeptide is 4-hydroxythreonine-4-phosphate dehydrogenase (Aromatoleum aromaticum (strain DSM 19018 / LMG 30748 / EbN1) (Azoarcus sp. (strain EbN1))).